A 147-amino-acid chain; its full sequence is Myosin-2 essential light chain (147 aa).

3 consecutive EF-hand domains span residues 7–42 (DQLAEFQEAFNLFDNRGDGKIQLSQVGECLRALGQN), 80–115 (DTADDFIEGLRHFDKDASGYISSAELRHLLTTLGEK), and 115–147 (KLTDEEVEQLLANMEDQQGNINYEEFVRMVMSG). S30 carries the phosphoserine modification. Positions 93, 95, 97, 99, and 104 each coordinate Ca(2+).

In terms of assembly, myosin is a hexamer of 2 heavy chains and 4 light chains.

The protein is Myosin-2 essential light chain (Mlc-c) of Drosophila melanogaster (Fruit fly).